The chain runs to 129 residues: Large ribosomal subunit protein bL12 (129 aa).

Belongs to the bacterial ribosomal protein bL12 family. Homodimer. Part of the ribosomal stalk of the 50S ribosomal subunit. Forms a multimeric L10(L12)X complex, where L10 forms an elongated spine to which 2 to 4 L12 dimers bind in a sequential fashion. Binds GTP-bound translation factors.

Forms part of the ribosomal stalk which helps the ribosome interact with GTP-bound translation factors. Is thus essential for accurate translation. This chain is Large ribosomal subunit protein bL12, found in Pseudothermotoga lettingae (strain ATCC BAA-301 / DSM 14385 / NBRC 107922 / TMO) (Thermotoga lettingae).